The sequence spans 284 residues: 4-diphosphocytidyl-2-C-methyl-D-erythritol kinase (284 aa).

Residue lysine 10 is part of the active site. Residue 95-105 coordinates ATP; that stretch reads PVAAGLGGGSS. Residue aspartate 137 is part of the active site.

Belongs to the GHMP kinase family. IspE subfamily.

It carries out the reaction 4-CDP-2-C-methyl-D-erythritol + ATP = 4-CDP-2-C-methyl-D-erythritol 2-phosphate + ADP + H(+). It participates in isoprenoid biosynthesis; isopentenyl diphosphate biosynthesis via DXP pathway; isopentenyl diphosphate from 1-deoxy-D-xylulose 5-phosphate: step 3/6. In terms of biological role, catalyzes the phosphorylation of the position 2 hydroxy group of 4-diphosphocytidyl-2C-methyl-D-erythritol. The protein is 4-diphosphocytidyl-2-C-methyl-D-erythritol kinase of Levilactobacillus brevis (strain ATCC 367 / BCRC 12310 / CIP 105137 / JCM 1170 / LMG 11437 / NCIMB 947 / NCTC 947) (Lactobacillus brevis).